Reading from the N-terminus, the 314-residue chain is ATP synthase gamma chain (314 aa).

It belongs to the ATPase gamma chain family. In terms of assembly, F-type ATPases have 2 components, CF(1) - the catalytic core - and CF(0) - the membrane proton channel. CF(1) has five subunits: alpha(3), beta(3), gamma(1), delta(1), epsilon(1). CF(0) has three main subunits: a, b and c.

The protein resides in the cell membrane. Its function is as follows. Produces ATP from ADP in the presence of a proton gradient across the membrane. The gamma chain is believed to be important in regulating ATPase activity and the flow of protons through the CF(0) complex. This Lactiplantibacillus plantarum (strain ATCC BAA-793 / NCIMB 8826 / WCFS1) (Lactobacillus plantarum) protein is ATP synthase gamma chain.